The chain runs to 356 residues: Alanine racemase (356 aa).

The active-site Proton acceptor; specific for D-alanine is lysine 35. At lysine 35 the chain carries N6-(pyridoxal phosphate)lysine. Residue arginine 130 participates in substrate binding. The Proton acceptor; specific for L-alanine role is filled by tyrosine 253. Methionine 301 lines the substrate pocket.

The protein belongs to the alanine racemase family. Requires pyridoxal 5'-phosphate as cofactor.

The catalysed reaction is L-alanine = D-alanine. Its pathway is amino-acid biosynthesis; D-alanine biosynthesis; D-alanine from L-alanine: step 1/1. Its function is as follows. Catalyzes the interconversion of L-alanine and D-alanine. May also act on other amino acids. The sequence is that of Alanine racemase (alr) from Sodalis glossinidius (strain morsitans).